Here is a 125-residue protein sequence, read N- to C-terminus: Glycine cleavage system H protein (125 aa).

One can recognise a Lipoyl-binding domain in the interval 23–103 (TALVGITDFA…PYNAWLIKMK (81 aa)). Lys64 is subject to N6-lipoyllysine.

It belongs to the GcvH family. As to quaternary structure, the glycine cleavage system is composed of four proteins: P, T, L and H. The cofactor is (R)-lipoate.

In terms of biological role, the glycine cleavage system catalyzes the degradation of glycine. The H protein shuttles the methylamine group of glycine from the P protein to the T protein. This chain is Glycine cleavage system H protein, found in Chlorobium chlorochromatii (strain CaD3).